The following is a 332-amino-acid chain: 2,3-diketo-L-gulonate reductase (332 aa).

The Proton donor role is filled by His-44. NAD(+) contacts are provided by residues 168 to 174, 224 to 225, and 304 to 306; these read ITMVDMS, WK, and GHE.

This sequence belongs to the LDH2/MDH2 oxidoreductase family. DlgD subfamily. As to quaternary structure, homodimer.

Its subcellular location is the cytoplasm. The enzyme catalyses 3-dehydro-L-gulonate + NAD(+) = 2,3-dioxo-L-gulonate + NADH + H(+). It catalyses the reaction 3-dehydro-L-gulonate + NADP(+) = 2,3-dioxo-L-gulonate + NADPH + H(+). Catalyzes the reduction of 2,3-diketo-L-gulonate in the presence of NADH, to form 3-keto-L-gulonate. The protein is 2,3-diketo-L-gulonate reductase of Mannheimia succiniciproducens (strain KCTC 0769BP / MBEL55E).